The sequence spans 69 residues: Protein transport protein Sec61 subunit gamma (69 aa).

Residues 1-40 (MDILEETAAPLKDFAKNSIRLFKKCTKPDAQEFQKIALAT) are Cytoplasmic-facing. The helical transmembrane segment at 41–61 (LIGFAIMGFIGFFVKLIHIPI) threads the bilayer. Residues 62-69 (NNILVGGV) are Extracellular-facing.

This sequence belongs to the SecE/SEC61-gamma family. As to quaternary structure, heterotrimeric complex composed of SEC61-alpha, SEC61-beta and SEC61-gamma.

It localises to the endoplasmic reticulum membrane. Necessary for protein translocation in the endoplasmic reticulum. The chain is Protein transport protein Sec61 subunit gamma (sec61g) from Dictyostelium discoideum (Social amoeba).